The following is a 201-amino-acid chain: B-cell CLL/lymphoma 7 protein family member A (201 aa).

The segment at 46 to 201 is disordered; it reads YKWVPVTEPK…GKIDSSSEES (156 aa). Basic and acidic residues predominate over residues 54 to 71; the sequence is PKSDDNKNKKKGKDDKYG. 3 stretches are compositionally biased toward polar residues: residues 73 to 83, 93 to 114, and 133 to 142; these read EVTTPENSSSP, SNQSSIADSSPLKQETSNNTSP, and QYPSKQPSSG. Basic and acidic residues predominate over residues 158-167; it reads TSKRDSKSQG. Residues 168–179 are compositionally biased toward polar residues; the sequence is DSESFLDSSKSA. Residues 192 to 201 are compositionally biased toward basic and acidic residues; the sequence is GKIDSSSEES.

The protein belongs to the BCL7 family.

The polypeptide is B-cell CLL/lymphoma 7 protein family member A (bcl7a) (Danio rerio (Zebrafish)).